A 411-amino-acid chain; its full sequence is Actin-like protein 9 (411 aa).

The segment covering 1–15 (MDVNGPKRWEPHRSL) has biased composition (basic and acidic residues). The segment at 1–23 (MDVNGPKRWEPHRSLDLNPRSTP) is disordered.

The protein belongs to the actin family. As to quaternary structure, interacts with ACTL7A.

It localises to the cytoplasmic vesicle. The protein localises to the secretory vesicle. It is found in the acrosome. Its subcellular location is the cytoplasm. The protein resides in the cytoskeleton. It localises to the perinuclear theca. Functionally, testis-specic protein that plays an important role in fusion of proacrosomal vesicles and perinuclear theca formation. This Rattus norvegicus (Rat) protein is Actin-like protein 9 (Actl9).